A 427-amino-acid chain; its full sequence is Trigger factor (427 aa).

The PPIase FKBP-type domain occupies Gly-163 to Pro-248.

This sequence belongs to the FKBP-type PPIase family. Tig subfamily.

The protein localises to the cytoplasm. It carries out the reaction [protein]-peptidylproline (omega=180) = [protein]-peptidylproline (omega=0). In terms of biological role, involved in protein export. Acts as a chaperone by maintaining the newly synthesized protein in an open conformation. Functions as a peptidyl-prolyl cis-trans isomerase. The protein is Trigger factor (tig) of Lactococcus lactis subsp. lactis (strain IL1403) (Streptococcus lactis).